The sequence spans 248 residues: Probable capsular polysaccharide biosynthesis protein YwqC (248 aa).

The next 2 helical transmembrane spans lie at I18 to F38 and L174 to L194.

The protein belongs to the CpsC/CapA family. Post-translationally, not phosphorylated in vitro by YwqD.

The protein resides in the cell membrane. Its pathway is capsule biogenesis; capsule polysaccharide biosynthesis. In terms of biological role, required for YwqD kinase activity. May bring YwqD and its substrates into contact. Probably involved in the regulation of capsular polysaccharide biosynthesis. This chain is Probable capsular polysaccharide biosynthesis protein YwqC (ywqC), found in Bacillus subtilis (strain 168).